Reading from the N-terminus, the 474-residue chain is Eukaryotic translation initiation factor 3 subunit L (474 aa).

Positions 255–449 (DAIRMFSHIL…DLDYALQGDL (195 aa)) constitute a PCI domain.

It belongs to the eIF-3 subunit L family. In terms of assembly, component of the eukaryotic translation initiation factor 3 (eIF-3) complex.

Its subcellular location is the cytoplasm. Component of the eukaryotic translation initiation factor 3 (eIF-3) complex, which is involved in protein synthesis of a specialized repertoire of mRNAs and, together with other initiation factors, stimulates binding of mRNA and methionyl-tRNAi to the 40S ribosome. The eIF-3 complex specifically targets and initiates translation of a subset of mRNAs involved in cell proliferation. The chain is Eukaryotic translation initiation factor 3 subunit L from Neurospora crassa (strain ATCC 24698 / 74-OR23-1A / CBS 708.71 / DSM 1257 / FGSC 987).